The chain runs to 436 residues: GTPase Obg (436 aa).

The Obg domain maps to 2 to 160; that stretch reads SMFLDTAKIQ…RELLLELKVL (159 aa). Residues 161-338 enclose the OBG-type G domain; it reads ADVGLVGFPS…LLDATAELLD (178 aa). GTP is bound by residues 167–174, 192–196, 214–217, 284–287, and 319–321; these read GFPSVGKS, FTTIV, DLPG, NKMD, and SSL. Mg(2+)-binding residues include S174 and T194. In terms of domain architecture, OCT spans 358 to 436; the sequence is GFDEEAPAFE…IGKFEFEFVD (79 aa).

This sequence belongs to the TRAFAC class OBG-HflX-like GTPase superfamily. OBG GTPase family. In terms of assembly, monomer. Requires Mg(2+) as cofactor.

Its subcellular location is the cytoplasm. Functionally, an essential GTPase which binds GTP, GDP and possibly (p)ppGpp with moderate affinity, with high nucleotide exchange rates and a fairly low GTP hydrolysis rate. Plays a role in control of the cell cycle, stress response, ribosome biogenesis and in those bacteria that undergo differentiation, in morphogenesis control. This chain is GTPase Obg, found in Streptococcus sanguinis (strain SK36).